Consider the following 538-residue polypeptide: Sterol esterase 2 (538 aa).

At 1 to 11 the chain is on the cytoplasmic side; sequence MVNKVVDEVQR. Residues 12–32 traverse the membrane as a helical; Signal-anchor for type II membrane protein segment; it reads LVSAIILTSFMTGLFILSLWK. Over 33–538 the chain is Lumenal; the sequence is NYVTVHFQHK…IENLRFPNAR (506 aa). A disordered region spans residues 42–87; the sequence is KNDPRDTRSSRTKIQPNDKKKKRPARHSRPLSISSTTPLDLQRDQE. The span at 60-70 shows a compositional bias: basic residues; that stretch reads KKKKRPARHSR. A phosphoserine mark is found at serine 73 and serine 107. Residue serine 287 is the Nucleophile of the active site. Catalysis depends on charge relay system residues aspartate 480 and histidine 511.

This sequence belongs to the AB hydrolase superfamily. Post-translationally, not glycosylated.

It is found in the cell membrane. It catalyses the reaction a sterol ester + H2O = a sterol + a fatty acid + H(+). In terms of biological role, mediates the hydrolysis of steryl esters. Required for mobilization of steryl ester, thereby playing a central role in lipid metabolism. This Saccharomyces cerevisiae (strain ATCC 204508 / S288c) (Baker's yeast) protein is Sterol esterase 2 (YEH2).